The primary structure comprises 305 residues: Ribonuclease BN (305 aa).

Residues His-64, His-66, Asp-68, His-69, His-141, Asp-212, and His-270 each contribute to the Zn(2+) site. Residue Asp-68 is the Proton acceptor of the active site.

Belongs to the RNase Z family. RNase BN subfamily. As to quaternary structure, homodimer. Zn(2+) serves as cofactor.

Zinc phosphodiesterase, which has both exoribonuclease and endoribonuclease activities. The polypeptide is Ribonuclease BN (Salmonella agona (strain SL483)).